The sequence spans 311 residues: Putative prophage capsid protein YqbE (311 aa).

The protein belongs to the encapsulin family. Family 3 subfamily.

Possibly a prophage capsid protein. The sequence is that of Putative prophage capsid protein YqbE (yqbE) from Bacillus subtilis (strain 168).